Reading from the N-terminus, the 420-residue chain is Cell division protein FtsA (420 aa).

Belongs to the FtsA/MreB family. Self-interacts. Interacts with FtsZ.

Its subcellular location is the cell inner membrane. Functionally, cell division protein that is involved in the assembly of the Z ring. May serve as a membrane anchor for the Z ring. The chain is Cell division protein FtsA from Escherichia coli O157:H7.